The primary structure comprises 343 residues: Uroporphyrinogen decarboxylase (343 aa).

Substrate is bound by residues 23-27 (RQAGR), D73, Y149, T204, and H320.

It belongs to the uroporphyrinogen decarboxylase family. In terms of assembly, homodimer.

Its subcellular location is the cytoplasm. The enzyme catalyses uroporphyrinogen III + 4 H(+) = coproporphyrinogen III + 4 CO2. Its pathway is porphyrin-containing compound metabolism; protoporphyrin-IX biosynthesis; coproporphyrinogen-III from 5-aminolevulinate: step 4/4. Functionally, catalyzes the decarboxylation of four acetate groups of uroporphyrinogen-III to yield coproporphyrinogen-III. The protein is Uroporphyrinogen decarboxylase of Bradyrhizobium sp. (strain BTAi1 / ATCC BAA-1182).